The following is a 482-amino-acid chain: Lipoamide acyltransferase component of branched-chain alpha-keto acid dehydrogenase complex, mitochondrial (482 aa).

The N-terminal 61 residues, 1–61 (MAAARVLRTW…HSLRTAAVLQ (61 aa)), are a transit peptide targeting the mitochondrion. Residues 64–139 (VVQFKLSDIG…YVGKPLIDIE (76 aa)) enclose the Lipoyl-binding domain. K105 bears the N6-lipoyllysine mark. Residue K133 is modified to N6-succinyllysine. The segment at 145–160 (DSEEDVVETPAVSHDE) is critical for association with PPM1K. A Peripheral subunit-binding (PSBD) domain is found at 172 to 209 (LATPAVRRLAMENNIKLSEVVGSGKDGRILKEDILSFL). K196 carries the N6-acetyllysine; alternate modification. An N6-succinyllysine; alternate modification is found at K196. K202 carries the post-translational modification N6-acetyllysine. A disordered region spans residues 217–252 (LPPSPKSEITPPPPQPKDRTFPTPIAKPPVFTGKDR). Residues 218 to 231 (PPSPKSEITPPPPQ) show a composition bias toward pro residues. A Phosphoserine modification is found at S220. 2 positions are modified to N6-acetyllysine: K243 and K250. Position 261 is an N6-succinyllysine (K261). K289 carries the post-translational modification N6-acetyllysine; alternate. Residue K289 is modified to N6-succinyllysine; alternate. Residue R291 coordinates CoA. 2 positions are modified to N6-acetyllysine: K295 and K304. CoA contacts are provided by S306, D349, Q378, S399, N400, S403, G424, and I426. At K435 the chain carries N6-acetyllysine. An N6-acetyllysine; alternate modification is found at K440. K440 bears the N6-succinyllysine; alternate mark. Residues H452 and D456 contribute to the active site.

This sequence belongs to the 2-oxoacid dehydrogenase family. In terms of assembly, forms a 24-polypeptide structural core with octahedral symmetry that represents the E2 component of the branched-chain alpha-ketoacid dehydrogenase (BCKDH) complex. The BCKDH complex is composed of three major building blocks E1, E2 and E3. It is organized around E2, a 24-meric cubic core composed of DBT, to which are associated 6 to 12 copies of E1, and approximately 6 copies of the dehydrogenase E3, a DLD dimer. Interacts with PPM1K with a 24:1 stoichiometry; the N-terminal region (residues 49-61) of PPM1K and C-terminal linker of the lipoyl domain of DBT/E2 (residues 145-160) are critical for this interaction whereas the lipoyl prosthetic group is dispensable. This interaction requires colocalization in mitochondria. PPM1K competes with BCKDK for binding to DBT; this interaction is modulated by branched-chain alpha-keto acids (BCKAs). At steady state, BCKDH holoenzyme preferentially binds BCKDK and BCKDHA is phosphorylated. In response to high levels of BCKAs, BCKDK is replaced by PPM1K leading to BCKDHA dephosphorylation. (R)-lipoate is required as a cofactor.

The protein localises to the mitochondrion matrix. The enzyme catalyses N(6)-[(R)-dihydrolipoyl]-L-lysyl-[protein] + 2-methylpropanoyl-CoA = N(6)-[(R)-S(8)-2-methylpropanoyldihydrolipoyl]-L-lysyl-[protein] + CoA. In terms of biological role, the branched-chain alpha-keto dehydrogenase complex catalyzes the overall conversion of alpha-keto acids to acyl-CoA and CO(2). It contains multiple copies of three enzymatic components: branched-chain alpha-keto acid decarboxylase (E1), lipoamide acyltransferase (E2) and lipoamide dehydrogenase (E3). Within this complex, the catalytic function of this enzyme is to accept, and to transfer to coenzyme A, acyl groups that are generated by the branched-chain alpha-keto acid decarboxylase component. The protein is Lipoamide acyltransferase component of branched-chain alpha-keto acid dehydrogenase complex, mitochondrial (Dbt) of Mus musculus (Mouse).